The chain runs to 166 residues: Endoribonuclease YbeY (166 aa).

Histidine 130, histidine 134, and histidine 140 together coordinate Zn(2+).

The protein belongs to the endoribonuclease YbeY family. Requires Zn(2+) as cofactor.

The protein resides in the cytoplasm. Functionally, single strand-specific metallo-endoribonuclease involved in late-stage 70S ribosome quality control and in maturation of the 3' terminus of the 16S rRNA. The chain is Endoribonuclease YbeY from Streptococcus uberis (strain ATCC BAA-854 / 0140J).